Consider the following 125-residue polypeptide: Large ribosomal subunit protein bL20 (125 aa).

It belongs to the bacterial ribosomal protein bL20 family.

Its function is as follows. Binds directly to 23S ribosomal RNA and is necessary for the in vitro assembly process of the 50S ribosomal subunit. It is not involved in the protein synthesizing functions of that subunit. The sequence is that of Large ribosomal subunit protein bL20 from Rhodospirillum rubrum (strain ATCC 11170 / ATH 1.1.1 / DSM 467 / LMG 4362 / NCIMB 8255 / S1).